The primary structure comprises 182 residues: CASP-like protein 2B1 (182 aa).

The Cytoplasmic portion of the chain corresponds to 1-12; that stretch reads MKLIDRRMRLTE. A helical transmembrane segment spans residues 13 to 31; sequence LLLRCSISVFALLALILVV. Topologically, residues 32–52 are extracellular; sequence TDTEVKLIFTIKKTAKYTDMK. A helical membrane pass occupies residues 53–73; sequence AVVFLVVANGIAAVYSLLQSV. Over 74 to 89 the chain is Cytoplasmic; the sequence is RCVVGTMKGRVLFSKP. A helical transmembrane segment spans residues 90-110; it reads LAWAFFSGDQAMAYLNVAAIA. Topologically, residues 111 to 141 are extracellular; that stretch reads ATAESGVIAREGEEDLQWMRVCNMYGKFCNQ. A helical membrane pass occupies residues 142–162; sequence MAIGVSSALLASIAMVFVSCI. At 163–182 the chain is on the cytoplasmic side; it reads SAFSLFRLYGATRDRRTTPW.

Belongs to the Casparian strip membrane proteins (CASP) family. In terms of assembly, homodimer and heterodimers.

It is found in the cell membrane. This Arabidopsis lyrata subsp. lyrata (Lyre-leaved rock-cress) protein is CASP-like protein 2B1.